The following is a 128-amino-acid chain: Small ribosomal subunit protein uS8c (128 aa).

The protein belongs to the universal ribosomal protein uS8 family. In terms of assembly, part of the 30S ribosomal subunit.

It localises to the plastid. The protein resides in the chloroplast. Its function is as follows. One of the primary rRNA binding proteins, it binds directly to 16S rRNA central domain where it helps coordinate assembly of the platform of the 30S subunit. This chain is Small ribosomal subunit protein uS8c (rps8), found in Welwitschia mirabilis (Tree tumbo).